We begin with the raw amino-acid sequence, 300 residues long: Pantothenate synthetase (300 aa).

30–37 (MGYLHEGH) contributes to the ATP binding site. His37 functions as the Proton donor in the catalytic mechanism. Gln61 lines the (R)-pantoate pocket. Gln61 contacts beta-alanine. Residue 147–150 (GMKD) participates in ATP binding. Gln153 is a (R)-pantoate binding site. Residues Val176 and 184 to 187 (KSSR) each bind ATP.

The protein belongs to the pantothenate synthetase family. As to quaternary structure, homodimer.

The protein localises to the cytoplasm. The catalysed reaction is (R)-pantoate + beta-alanine + ATP = (R)-pantothenate + AMP + diphosphate + H(+). The protein operates within cofactor biosynthesis; (R)-pantothenate biosynthesis; (R)-pantothenate from (R)-pantoate and beta-alanine: step 1/1. Functionally, catalyzes the condensation of pantoate with beta-alanine in an ATP-dependent reaction via a pantoyl-adenylate intermediate. This Geobacillus kaustophilus (strain HTA426) protein is Pantothenate synthetase.